The chain runs to 75 residues: Large ribosomal subunit protein bL28c (75 aa).

It belongs to the bacterial ribosomal protein bL28 family.

The protein localises to the plastid. Its subcellular location is the chloroplast. The sequence is that of Large ribosomal subunit protein bL28c from Cyanidioschyzon merolae (strain NIES-3377 / 10D) (Unicellular red alga).